The chain runs to 744 residues: Eukaryotic translation initiation factor 3 subunit B (744 aa).

Positions 1–21 (MAPSFDHLPDPEEDEYDEEEL) are disordered. The segment covering 11 to 21 (PEEDEYDEEEL) has biased composition (acidic residues). An RRM domain is found at 40-126 (TFVVIDGLPE…HTLRVNKLTD (87 aa)). WD repeat units lie at residues 193–232 (DRQH…RQKR), 234–290 (AHPF…PLRS), 307–348 (PIKR…LLDK), and 577–622 (ADHY…LREE).

This sequence belongs to the eIF-3 subunit B family. In terms of assembly, component of the eukaryotic translation initiation factor 3 (eIF-3) complex.

It is found in the cytoplasm. RNA-binding component of the eukaryotic translation initiation factor 3 (eIF-3) complex, which is involved in protein synthesis of a specialized repertoire of mRNAs and, together with other initiation factors, stimulates binding of mRNA and methionyl-tRNAi to the 40S ribosome. The eIF-3 complex specifically targets and initiates translation of a subset of mRNAs involved in cell proliferation. The protein is Eukaryotic translation initiation factor 3 subunit B (prt1) of Botryotinia fuckeliana (strain B05.10) (Noble rot fungus).